The following is a 105-amino-acid chain: Ribosomal silencing factor RsfS (105 aa).

It belongs to the Iojap/RsfS family. As to quaternary structure, interacts with ribosomal protein uL14 (rplN).

The protein localises to the cytoplasm. Its function is as follows. Functions as a ribosomal silencing factor. Interacts with ribosomal protein uL14 (rplN), blocking formation of intersubunit bridge B8. Prevents association of the 30S and 50S ribosomal subunits and the formation of functional ribosomes, thus repressing translation. The sequence is that of Ribosomal silencing factor RsfS from Escherichia coli O6:H1 (strain CFT073 / ATCC 700928 / UPEC).